A 156-amino-acid chain; its full sequence is Small ribosomal subunit protein uS7 (156 aa).

This sequence belongs to the universal ribosomal protein uS7 family. As to quaternary structure, part of the 30S ribosomal subunit. Contacts proteins S9 and S11.

In terms of biological role, one of the primary rRNA binding proteins, it binds directly to 16S rRNA where it nucleates assembly of the head domain of the 30S subunit. Is located at the subunit interface close to the decoding center, probably blocks exit of the E-site tRNA. The chain is Small ribosomal subunit protein uS7 from Bordetella bronchiseptica (strain ATCC BAA-588 / NCTC 13252 / RB50) (Alcaligenes bronchisepticus).